The following is a 414-amino-acid chain: 3-phosphoshikimate 1-carboxyvinyltransferase (414 aa).

3-phosphoshikimate contacts are provided by lysine 20, serine 21, and arginine 25. Lysine 20 provides a ligand contact to phosphoenolpyruvate. 2 residues coordinate phosphoenolpyruvate: glycine 85 and arginine 113. 6 residues coordinate 3-phosphoshikimate: serine 154, serine 155, glutamine 156, serine 181, aspartate 296, and lysine 323. Glutamine 156 provides a ligand contact to phosphoenolpyruvate. The active-site Proton acceptor is the aspartate 296. Positions 327, 371, and 395 each coordinate phosphoenolpyruvate.

Belongs to the EPSP synthase family. Monomer.

The protein localises to the cytoplasm. The enzyme catalyses 3-phosphoshikimate + phosphoenolpyruvate = 5-O-(1-carboxyvinyl)-3-phosphoshikimate + phosphate. The protein operates within metabolic intermediate biosynthesis; chorismate biosynthesis. In terms of biological role, catalyzes the transfer of the enolpyruvyl moiety of phosphoenolpyruvate (PEP) to the 5-hydroxyl of shikimate-3-phosphate (S3P) to produce enolpyruvyl shikimate-3-phosphate and inorganic phosphate. The sequence is that of 3-phosphoshikimate 1-carboxyvinyltransferase from Saccharolobus islandicus (strain M.14.25 / Kamchatka #1) (Sulfolobus islandicus).